Reading from the N-terminus, the 336-residue chain is UPF0065 protein in tcbD-tcbE intergenic region (336 aa).

The N-terminal stretch at 1–32 is a signal peptide; that stretch reads MHSSKCPDLANIGRRRVLAGIALAMTTSSTRA.

Belongs to the UPF0065 (bug) family.

The protein localises to the periplasm. The sequence is that of UPF0065 protein in tcbD-tcbE intergenic region from Pseudomonas sp. (strain P51).